Here is a 302-residue protein sequence, read N- to C-terminus: Oxygen-dependent coproporphyrinogen-III oxidase (302 aa).

Position 94 (Ser-94) interacts with substrate. Residues His-98 and His-108 each coordinate a divalent metal cation. Residue His-108 is the Proton donor of the active site. 110-112 (NVR) contributes to the substrate binding site. A divalent metal cation is bound by residues His-147 and His-177. The interval 242–277 (YVEFNLVYDRGTLFGLQTGGRTESILMSMPPLVRWQ) is important for dimerization. Position 260–262 (260–262 (GGR)) interacts with substrate.

This sequence belongs to the aerobic coproporphyrinogen-III oxidase family. In terms of assembly, homodimer. It depends on a divalent metal cation as a cofactor.

The protein resides in the cytoplasm. It carries out the reaction coproporphyrinogen III + O2 + 2 H(+) = protoporphyrinogen IX + 2 CO2 + 2 H2O. The protein operates within porphyrin-containing compound metabolism; protoporphyrin-IX biosynthesis; protoporphyrinogen-IX from coproporphyrinogen-III (O2 route): step 1/1. Its function is as follows. Involved in the heme biosynthesis. Catalyzes the aerobic oxidative decarboxylation of propionate groups of rings A and B of coproporphyrinogen-III to yield the vinyl groups in protoporphyrinogen-IX. This chain is Oxygen-dependent coproporphyrinogen-III oxidase, found in Shewanella putrefaciens (strain CN-32 / ATCC BAA-453).